Reading from the N-terminus, the 213-residue chain is Peptidyl-tRNA hydrolase (213 aa).

Tyr26 provides a ligand contact to tRNA. Catalysis depends on His31, which acts as the Proton acceptor. TRNA is bound by residues Tyr78, Asn80, and Asn126.

This sequence belongs to the PTH family. In terms of assembly, monomer.

It localises to the cytoplasm. The enzyme catalyses an N-acyl-L-alpha-aminoacyl-tRNA + H2O = an N-acyl-L-amino acid + a tRNA + H(+). In terms of biological role, hydrolyzes ribosome-free peptidyl-tRNAs (with 1 or more amino acids incorporated), which drop off the ribosome during protein synthesis, or as a result of ribosome stalling. Its function is as follows. Catalyzes the release of premature peptidyl moieties from peptidyl-tRNA molecules trapped in stalled 50S ribosomal subunits, and thus maintains levels of free tRNAs and 50S ribosomes. This Nostoc punctiforme (strain ATCC 29133 / PCC 73102) protein is Peptidyl-tRNA hydrolase.